A 389-amino-acid chain; its full sequence is Cuticlin-3 (389 aa).

A signal peptide spans 1–19 (MARYSLGLGLCLLVASVSA). The Extracellular portion of the chain corresponds to 20–354 (IPVDNNVEGE…ELCISSFHIS (335 aa)). The ZP domain occupies 33–278 (ECGPTSITVN…PTCSEPQGFG (246 aa)). Residue Asn-284 is glycosylated (N-linked (GlcNAc...) asparagine). Residues 355–375 (VVTVFLGLTVFVAIFITYMIV) traverse the membrane as a helical segment. The Cytoplasmic segment spans residues 376 to 389 (SRMMVPSDKMQSAC).

Its subcellular location is the cell membrane. Functionally, plays a role in alae formation in L1 larvae. The protein is Cuticlin-3 of Caenorhabditis elegans.